The chain runs to 213 residues: E3 ubiquitin-protein ligase NleG8 (213 aa).

The interval 136-189 (CPITLCVPETGVFVKNARCSKVCSLYDISALTEMLRRNASHPLSREAFTPGMIV) is RING/U-box domain. The PDZ-binding motif signature appears at 211-213 (TRL).

This sequence belongs to the NleG E3 ligase family. Interacts with host GOPC (human protein).

The protein localises to the secreted. Its subcellular location is the host cytoplasm. The catalysed reaction is S-ubiquitinyl-[E2 ubiquitin-conjugating enzyme]-L-cysteine + [acceptor protein]-L-lysine = [E2 ubiquitin-conjugating enzyme]-L-cysteine + N(6)-ubiquitinyl-[acceptor protein]-L-lysine.. Functionally, effector proteins function to alter host cell physiology and promote bacterial survival in host tissues. This protein is an E3 ubiquitin-protein ligase that probably interferes with the host's ubiquitination pathway and targets host proteins for proteasomal degradation. Mice infected with a strain of bacteria deleted for this gene had an increased survival rate. Can be ubiquitinylated, and ubiquitinate ubiquitin, giving rise to polyubiquitin chains (in vitro). This is E3 ubiquitin-protein ligase NleG8 from Citrobacter rodentium.